A 105-amino-acid polypeptide reads, in one-letter code: Pyrimidine/purine nucleoside phosphorylase (105 aa).

The protein belongs to the nucleoside phosphorylase PpnP family.

It catalyses the reaction a purine D-ribonucleoside + phosphate = a purine nucleobase + alpha-D-ribose 1-phosphate. The catalysed reaction is adenosine + phosphate = alpha-D-ribose 1-phosphate + adenine. The enzyme catalyses cytidine + phosphate = cytosine + alpha-D-ribose 1-phosphate. It carries out the reaction guanosine + phosphate = alpha-D-ribose 1-phosphate + guanine. It catalyses the reaction inosine + phosphate = alpha-D-ribose 1-phosphate + hypoxanthine. The catalysed reaction is thymidine + phosphate = 2-deoxy-alpha-D-ribose 1-phosphate + thymine. The enzyme catalyses uridine + phosphate = alpha-D-ribose 1-phosphate + uracil. It carries out the reaction xanthosine + phosphate = alpha-D-ribose 1-phosphate + xanthine. Functionally, catalyzes the phosphorolysis of diverse nucleosides, yielding D-ribose 1-phosphate and the respective free bases. Can use uridine, adenosine, guanosine, cytidine, thymidine, inosine and xanthosine as substrates. Also catalyzes the reverse reactions. The protein is Pyrimidine/purine nucleoside phosphorylase of Cupriavidus taiwanensis (strain DSM 17343 / BCRC 17206 / CCUG 44338 / CIP 107171 / LMG 19424 / R1) (Ralstonia taiwanensis (strain LMG 19424)).